The sequence spans 191 residues: Neuronal calcium sensor 1 (191 aa).

The N-myristoyl glycine moiety is linked to residue glycine 2. 4 EF-hand domains span residues 24–59 (EAEI…FPFG), 60–95 (DPSK…TSRG), 96–131 (TVEE…IYRM), and 144–179 (TPEK…DPTI). Residues aspartate 73, asparagine 75, aspartate 77, glutamate 84, aspartate 109, aspartate 111, aspartate 113, glutamate 120, aspartate 157, asparagine 159, aspartate 161, lysine 163, and glutamate 168 each coordinate Ca(2+).

The protein belongs to the recoverin family.

Neuronal calcium sensor, regulator of G protein-coupled receptor phosphorylation in a calcium dependent manner. Regulates neurite extension and branching by activity-dependent (Ca2+) influx in growth cones. The sequence is that of Neuronal calcium sensor 1 from Aplysia californica (California sea hare).